We begin with the raw amino-acid sequence, 100 residues long: MIYDNRLLKVICAPHVSEKTSAVMEKNNILVLKVDKKATKAAIKQAILQLFEVKVKEIHTIIVKGKTKRHGKRIGFRSNWKKAYITLYEGQNFTLINGAK.

This sequence belongs to the universal ribosomal protein uL23 family. Part of the 50S ribosomal subunit. Contacts protein L29, and trigger factor when it is bound to the ribosome.

Its function is as follows. One of the early assembly proteins it binds 23S rRNA. One of the proteins that surrounds the polypeptide exit tunnel on the outside of the ribosome. Forms the main docking site for trigger factor binding to the ribosome. This Baumannia cicadellinicola subsp. Homalodisca coagulata protein is Large ribosomal subunit protein uL23.